The following is a 252-amino-acid chain: Flagellar brake protein YcgR (252 aa).

The 116-residue stretch at 123-238 (QRREFYRVPT…TLATVQKYIT (116 aa)) folds into the PilZ domain.

Belongs to the YcgR family. As to quaternary structure, monomer. Interacts with the flagellar basal bodies.

The protein resides in the bacterial flagellum basal body. Acts as a flagellar brake, regulating swimming and swarming in a bis-(3'-5') cyclic diguanylic acid (c-di-GMP)-dependent manner. Binds 1 c-di-GMP dimer per subunit. Increasing levels of c-di-GMP lead to decreased motility. The sequence is that of Flagellar brake protein YcgR from Janthinobacterium sp. (strain Marseille) (Minibacterium massiliensis).